The following is a 297-amino-acid chain: Large ribosomal subunit protein uL15m (297 aa).

Residues 1–21 (MSGNGVHGVHGALQLLRSLPK) constitute a mitochondrion transit peptide. The disordered stretch occupies residues 23–69 (SLANLRPNPGSKKPERRRGRGRYRGRKCGRGHKGERQRGNRPRLGFE). Basic residues predominate over residues 36–53 (PERRRGRGRYRGRKCGRG).

The protein belongs to the universal ribosomal protein uL15 family. As to quaternary structure, component of the mitochondrial ribosome large subunit (39S) which comprises a 16S rRNA and about 50 distinct proteins.

It localises to the mitochondrion. The sequence is that of Large ribosomal subunit protein uL15m (MRPL15) from Gallus gallus (Chicken).